We begin with the raw amino-acid sequence, 916 residues long: Isoleucine--tRNA ligase (916 aa).

Residues 57-67 (PYANGNLHMGH) carry the 'HIGH' region motif. Glu554 contacts L-isoleucyl-5'-AMP. The 'KMSKS' region motif lies at 595–599 (KMSKS). Lys598 is an ATP binding site. 4 residues coordinate Zn(2+): Cys885, Cys888, Cys905, and Cys908.

Belongs to the class-I aminoacyl-tRNA synthetase family. IleS type 1 subfamily. As to quaternary structure, monomer. Zn(2+) is required as a cofactor.

It is found in the cytoplasm. The catalysed reaction is tRNA(Ile) + L-isoleucine + ATP = L-isoleucyl-tRNA(Ile) + AMP + diphosphate. Functionally, catalyzes the attachment of isoleucine to tRNA(Ile). As IleRS can inadvertently accommodate and process structurally similar amino acids such as valine, to avoid such errors it has two additional distinct tRNA(Ile)-dependent editing activities. One activity is designated as 'pretransfer' editing and involves the hydrolysis of activated Val-AMP. The other activity is designated 'posttransfer' editing and involves deacylation of mischarged Val-tRNA(Ile). This chain is Isoleucine--tRNA ligase, found in Staphylococcus saprophyticus subsp. saprophyticus (strain ATCC 15305 / DSM 20229 / NCIMB 8711 / NCTC 7292 / S-41).